The chain runs to 1363 residues: MFLILLISLPTAFAVIGDLKCTTVSINDVDTGVPSISTDTVDVTNGLGTYYVLDRVYLNTTLLLNGYYPTSGSTYRNMALKGTLLLSTLWFKPPFLSDFTNGIFAKVKNTKVIKDGVKYSEFPAITIGSTFVNTSYSVVVQPHTTNLDNKLQGLLEISVCQYTMCEYPNTICNPNLGNQRVELWHWDTGVVSCLYKRNFTYDVNADYLYFHFYQEGGTFYAYFTDTGVVTKFLFNVYLGTVLSHYYVMPLTCNSALTLEYWVTPLTSKQYLLAFNQDGVIFNAVDCKSDFMSEIKCKTLSIAPSTGVYELNGYTVQPIADVYRRIPNLPDCNIEAWLNDKSVPSPLNWERKTFSNCNFNMSSLMSFIQADSFTCNNIDAAKIYGMCFSSITIDKFAIPNGRKVDLQLGNLGYLQSFNYRIDTTATSCQLYYNLPAANVSVSRFNPSTWNRRFGFTEQSVFKPQPAGVFTDHDVVYAQHCFKAPTNFCPCKLDGSLCVGSGSGIDAGYKNTGIGTCPAGTNYLTCHNAAQCGCLCTPDPITSKATGPYKCPQTKYLVGIGEHCSGLAIKSDYCGGNPCSCQPQAFLGWSVDSCLQGDRCNIFANFILHDVNSGTTCSTDLQKSNTDIILGVCVNYDLYGITGQGIFVEVNATYYNSWQNLLYDSNGNLYGFRDYLTNRTFMIRSCYSGRVSAAFHANSSEPALLFRNFKCNYVFNNTLSRQLQPINYFDSYLGCVVNADNSTSSVVQTCDLTVGSGYCVDYSTKRRSRRSITTGYRFTNFEPFTVNSVNDSLEPVGGLYEIQIPSEFTIGNMEEFIQTSSPKVTIDCSAFVCGDYAACKSQLVEYGSFCDNINAILTEVNELLDTTQLQVANSLMNGVTLSTKLKDGVNFNVDDINFSPVLGCLGSDCNKVSSRSAIEDLLFSKVKLSDVGFVEAYNNCTGGAEIRDLICVQSYNGIKVLPPLLSENQISGYTLAATSASLFPPWSAAAGVPFYLNVQYRINGIGVTMDVLSQNQKLIANAFNNALGAIQEGFDATNSALVKIQAVVNANAEALNNLLQQLSNRFGAISSSLQEILSRLDALEAQAQIDRLINGRLTALNAYVSQQLSDSTLVKFSAAQAMEKVNECVKSQSSRINFCGNGNHIISLVQNAPYGLYFIHFSYVPTKYVTAKVSPGLCIAGDRGIAPKSGYFVNVNNTWMFTGSGYYYPEPITGNNVVVMSTCAVNYTKAPDVMLNISTPNLPDFKEELDQWFKNQTSVAPDLSLDYINVTFLDLQDEMNRLQEAIKVLNQSYINLKDIGTYEYYVKWPWYVWLLIGFAGVAMLVLLFFICCCTGCGTSCFKKCGGCCDDYTGHQELVIKTSHDD.

The first 13 residues, 1–13 (MFLILLISLPTAF), serve as a signal peptide directing secretion. Over 14–1307 (AVIGDLKCTT…GTYEYYVKWP (1294 aa)) the chain is Extracellular. The BetaCoV S1-NTD domain maps to 15-298 (VIGDLKCTTV…DFMSEIKCKT (284 aa)). Intrachain disulfides connect cysteine 21–cysteine 165, cysteine 160–cysteine 193, cysteine 172–cysteine 252, cysteine 286–cysteine 296, and cysteine 331–cysteine 356. 2 N-linked (GlcNAc...) asparagine; by host glycosylation sites follow: asparagine 59 and asparagine 133. Asparagine 198 is a glycosylation site (N-linked (GlcNAc...) asparagine; by host). The BetaCoV S1-CTD domain maps to 329–617 (PDCNIEAWLN…DVNSGTTCST (289 aa)). Asparagine 359 carries N-linked (GlcNAc...) asparagine; by host glycosylation. Disulfide bonds link cysteine 374/cysteine 427 and cysteine 386/cysteine 615. Residues asparagine 437, asparagine 649, asparagine 676, asparagine 696, asparagine 714, asparagine 739, and asparagine 788 are each glycosylated (N-linked (GlcNAc...) asparagine; by host). Fusion peptide stretches follow at residues 914–935 (SAIEDLLFSKVKLSDVGFVEAY) and 933–953 (EAYNNCTGGAEIRDLICVQSY). A glycan (N-linked (GlcNAc...) asparagine; by host) is linked at asparagine 937. Residues cysteine 938 and cysteine 949 are joined by a disulfide bond. Residues 1014 to 1064 (QKLIANAFNNALGAIQEGFDATNSALVKIQAVVNANAEALNNLLQQLSNRF) form a heptad repeat 1 region. Positions 1043–1087 (QAVVNANAEALNNLLQQLSNRFGAISSSLQEILSRLDALEAQAQI) form a coiled coil. 6 N-linked (GlcNAc...) asparagine; by host glycosylation sites follow: asparagine 1194, asparagine 1224, asparagine 1234, asparagine 1253, asparagine 1267, and asparagine 1288. The interval 1258-1296 (APDLSLDYINVTFLDLQDEMNRLQEAIKVLNQSYINLKD) is heptad repeat 2. Positions 1269 to 1297 (TFLDLQDEMNRLQEAIKVLNQSYINLKDI) form a coiled coil. The helical transmembrane segment at 1308–1328 (WYVWLLIGFAGVAMLVLLFFI) threads the bilayer. Topologically, residues 1329 to 1363 (CCCTGCGTSCFKKCGGCCDDYTGHQELVIKTSHDD) are cytoplasmic. The KxHxx signature appears at 1359-1363 (TSHDD).

Belongs to the betacoronaviruses spike protein family. As to quaternary structure, homotrimer; each monomer consists of a S1 and a S2 subunit. The resulting peplomers protrude from the virus surface as spikes. In terms of processing, specific enzymatic cleavages in vivo yield mature proteins. The precursor is processed into S1 and S2 by host cell furin or another cellular protease to yield the mature S1 and S2 proteins. Additionally, a second cleavage leads to the release of a fusion peptide after viral attachment to host cell receptor. The cytoplasmic Cys-rich domain is palmitoylated. Spike glycoprotein is digested within host endosomes.

The protein localises to the virion membrane. The protein resides in the host endoplasmic reticulum-Golgi intermediate compartment membrane. It localises to the host cell membrane. Attaches the virion to the cell membrane by interacting with host receptor, initiating the infection. Functionally, mediates fusion of the virion and cellular membranes by acting as a class I viral fusion protein. Under the current model, the protein has at least three conformational states: pre-fusion native state, pre-hairpin intermediate state, and post-fusion hairpin state. During viral and target cell membrane fusion, the coiled coil regions (heptad repeats) assume a trimer-of-hairpins structure, positioning the fusion peptide in close proximity to the C-terminal region of the ectodomain. The formation of this structure appears to drive apposition and subsequent fusion of viral and target cell membranes. In terms of biological role, acts as a viral fusion peptide which is unmasked following S2 cleavage occurring upon virus endocytosis. The polypeptide is Spike glycoprotein (Bovine coronavirus (strain LSU-94LSS-051) (BCoV-LSU)).